The following is a 459-amino-acid chain: Proton-coupled folate transporter (459 aa).

An N-acetylmethionine modification is found at Met1. Residues 1–25 lie on the Cytoplasmic side of the membrane; it reads MEGRANSPGEPRAWPTRSVLCRGCV. The helical transmembrane segment at 26–44 threads the bilayer; the sequence is EPLVFLANFALVLQGPVTT. Over 45-82 the chain is Extracellular; the sequence is QYLWHRFSADLGYNGTRHRDSCSNHSVDPIAQEVETLT. N-linked (GlcNAc...) asparagine glycosylation is found at Asn58 and Asn68. A disulfide bridge connects residues Cys66 and Cys298. A helical transmembrane segment spans residues 83–108; sequence SHWTLYMNVGGFLVGLFSSTLLGAWS. Residues 109 to 112 lie on the Cytoplasmic side of the membrane; that stretch reads DCVG. Residues 113–135 traverse the membrane as a helical segment; sequence RRPLLVLASLGLLLQTVLSIFVV. The Extracellular segment spans residues 136–140; sequence QLHLH. Residues 141–154 traverse the membrane as a helical segment; sequence IGYLVLGRILCALL. Residues 155–177 lie on the Cytoplasmic side of the membrane; sequence GDFSGLLAASFASVADVSSSRTR. 2 residues coordinate H(+): Asp156 and Glu185. The helical transmembrane segment at 178 to 203 threads the bilayer; the sequence is TIRMALLEACIGVAGMLASFIGGFLL. Over 204–208 the chain is Extracellular; sequence QEQVY. Residues 209 to 227 form a helical membrane-spanning segment; sequence VNPFWLALAVLTVMTLYAA. Topologically, residues 228–266 are cytoplasmic; it reads FCFGETVKERTPTRLFTLRHHRSVIQLYVTQAPEKSRKH. The chain crosses the membrane as a helical span at residues 267–289; the sequence is LALYSLAIFVMITVHLGAQDILT. His281 is a H(+) binding site. Over 290–302 the chain is Extracellular; the sequence is LYELSAPLCWDSR. The helical transmembrane segment at 303–325 threads the bilayer; sequence LISYGSAAQQLPYLTSLLGLRLL. The Cytoplasmic portion of the chain corresponds to 326-331; the sequence is QYCLAD. The helical transmembrane segment at 332 to 351 threads the bilayer; the sequence is TWVAEIGLVFNILGMMVFAF. Topologically, residues 352–355 are extracellular; that stretch reads ATIT. A helical transmembrane segment spans residues 356–376; that stretch reads PLMFTGYGLLFLSLVVTPIIR. The Cytoplasmic portion of the chain corresponds to 377-388; it reads AKLSRLVRQSEQ. A helical membrane pass occupies residues 389–414; it reads GALFSALACVNGLAMLMASGIFNSLY. Over 415-422 the chain is Extracellular; sequence PATLNLMK. A helical transmembrane segment spans residues 423-441; the sequence is GFPFLLAAGLLFIPAILMG. The Cytoplasmic segment spans residues 442–459; that stretch reads ILERDNHCPEFQEFSQSP. The residue at position 458 (Ser458) is a Phosphoserine.

This sequence belongs to the major facilitator superfamily. SLC46A family. As to quaternary structure, monomer. In terms of tissue distribution, expressed in retina and retinal pigment epithelium.

The protein resides in the cell membrane. Its subcellular location is the apical cell membrane. It localises to the basolateral cell membrane. The protein localises to the endosome membrane. It is found in the cytoplasm. It carries out the reaction folate(in) + H(+)(in) = folate(out) + H(+)(out). The enzyme catalyses (6S)-5-methyl-5,6,7,8-tetrahydrofolate(in) + H(+)(in) = (6S)-5-methyl-5,6,7,8-tetrahydrofolate(out) + H(+)(out). It catalyses the reaction methotrexate(in) + H(+)(in) = methotrexate(out) + H(+)(out). The catalysed reaction is pemetrexed(in) + H(+)(in) = pemetrexed(out) + H(+)(out). In terms of biological role, proton-coupled folate symporter that mediates folate absorption using an H(+) gradient as a driving force. Involved in the intestinal absorption of folates at the brush-border membrane of the proximal jejunum, and the transport from blood to cerebrospinal fluid across the choroid plexus. Functions at acidic pH via alternate outward- and inward-open conformation states. Protonation of residues in the outward open state primes the protein for transport. Binding of folate promotes breaking of salt bridge network and subsequent closure of the extracellular gate, leading to the inward-open state and release of protons and folate. Also able to transport antifolate drugs, such as methotrexate and pemetrexed. Involved in FOLR1-mediated endocytosis by serving as a route of export of folates from acidified endosomes. Also acts as a lower-affinity, pH-independent heme carrier protein and constitutes the main importer of heme in the intestine. Imports heme in the retina and retinal pigment epithelium, in neurons of the hippocampus, in hepatocytes and in the renal epithelial cells. Hence, participates in the trafficking of heme and increases intracellular iron content. This chain is Proton-coupled folate transporter, found in Bos taurus (Bovine).